A 745-amino-acid polypeptide reads, in one-letter code: MRNHGPGSERKDACVSAPDPTFSDDVPADVRERHARLSQDLDDYSYRYYLGSPIISDAEYDQLMAELRDLEAQYPSLVTPDSPTQKVGAPISNEFAPVEHLERMQSLDNAFSDAQLEAWAHRVSAEVPVDAFLCELKIDGLAVALVYEKGRLVRAATRGDGRIGEDITLNIRTIDTVPLRLDESRYPAPELLEVRGEVFLPVKAFEQLNSRLADEGKPPFANPRNAAAGSLRQKDPRVTASRPLSMLVHGIGAHRGVTITHQSQSYELLAAWGLPVSDRIRVVSTLDEVREYIAYYAEHRHDPEYEIDGVVVKVDDVSLQRRLGSTSRAPRWAIAYKYPPEEVTTKLLDIKTSVGRTGRVTPYAVLEPVKVAGSEVEFATLHNAQEVARKGVLIGDTVVVRKAGDIIPEVVGPVVEKRTGTERPFVMPTECPECGSPLGQQKEGDVDLRCPNTRYCKGQLRERLAFIAGRKALDIEALGYVAATALTQPLEPAEPPLRDEGDLFSLTVEQLLPIRTLVLDPDTAEPKIDPKTGKPKVVSFFANQKGEPKKIVEKLFQQLEEAKKRPLWRVLVALSIRHVGPRAAEDLARHFRSLDAIAQASEEELEAVEGIGPTIARSIVDWFSVDWHREIVEKWRAAGVRMEEEGADDGPRLLDGITTVITGTLEKYSRDGAKEAVQKLGGRVTGSVSRKTDFVVVGANPGSKYDKAVKLGVPILDEAGFEVLLTQGPEAARAARLSEDESVLS.

The tract at residues 1–27 (MRNHGPGSERKDACVSAPDPTFSDDVP) is disordered. Residues 57–61 (DAEYD), 106–107 (SL), and Glu135 contribute to the NAD(+) site. Lys137 functions as the N6-AMP-lysine intermediate in the catalytic mechanism. Positions 158 and 197 each coordinate NAD(+). A disordered region spans residues 216–235 (GKPPFANPRNAAAGSLRQKD). Positions 313 and 337 each coordinate NAD(+). Cys431, Cys434, Cys450, and Cys456 together coordinate Zn(2+). The 90-residue stretch at 649 to 738 (DGPRLLDGIT…PEAARAARLS (90 aa)) folds into the BRCT domain.

It belongs to the NAD-dependent DNA ligase family. LigA subfamily. Mg(2+) is required as a cofactor. It depends on Mn(2+) as a cofactor.

It carries out the reaction NAD(+) + (deoxyribonucleotide)n-3'-hydroxyl + 5'-phospho-(deoxyribonucleotide)m = (deoxyribonucleotide)n+m + AMP + beta-nicotinamide D-nucleotide.. DNA ligase that catalyzes the formation of phosphodiester linkages between 5'-phosphoryl and 3'-hydroxyl groups in double-stranded DNA using NAD as a coenzyme and as the energy source for the reaction. It is essential for DNA replication and repair of damaged DNA. This chain is DNA ligase, found in Thermobifida fusca (strain YX).